A 308-amino-acid polypeptide reads, in one-letter code: Transcription initiation factor IIB (308 aa).

A run of 2 repeats spans residues 124–207 and 218–299.

It belongs to the TFIIB family.

Stabilizes TBP binding to an archaeal box-A promoter. Also responsible for recruiting RNA polymerase II to the pre-initiation complex (DNA-TBP-TFIIB). This is Transcription initiation factor IIB from Sulfurisphaera tokodaii (strain DSM 16993 / JCM 10545 / NBRC 100140 / 7) (Sulfolobus tokodaii).